A 328-amino-acid chain; its full sequence is Acetaldehyde dehydrogenase 3 (328 aa).

17 to 20 (SGNI) contacts NAD(+). C135 acts as the Acyl-thioester intermediate in catalysis. NAD(+)-binding positions include 166–174 (SAGPGTRAN) and N298.

This sequence belongs to the acetaldehyde dehydrogenase family.

The enzyme catalyses acetaldehyde + NAD(+) + CoA = acetyl-CoA + NADH + H(+). This Nocardia farcinica (strain IFM 10152) protein is Acetaldehyde dehydrogenase 3.